We begin with the raw amino-acid sequence, 298 residues long: Tyrosine recombinase XerC (298 aa).

In terms of domain architecture, Core-binding (CB) spans 2 to 88 (TDLHTDVERY…ALRSFFDWLV (87 aa)). The region spanning 109-288 (HLPKNIDVDD…DFQHLASVYD (180 aa)) is the Tyr recombinase domain. Catalysis depends on residues Arg-148, Lys-172, His-240, Arg-243, and His-266. Residue Tyr-275 is the O-(3'-phospho-DNA)-tyrosine intermediate of the active site.

It belongs to the 'phage' integrase family. XerC subfamily. As to quaternary structure, forms a cyclic heterotetrameric complex composed of two molecules of XerC and two molecules of XerD, in which XerC interacts with XerD via its C-terminal region, XerD interacts with XerC via its C-terminal region and so on.

The protein localises to the cytoplasm. With respect to regulation, ftsK may regulate the catalytic switch between XerC and XerD in the heterotetrameric complex during the two steps of the recombination process. Functionally, site-specific tyrosine recombinase, which acts by catalyzing the cutting and rejoining of the recombining DNA molecules. Binds cooperatively to specific DNA consensus sequences that are separated from XerD binding sites by a short central region, forming the heterotetrameric XerC-XerD complex that recombines DNA substrates. The complex is essential to convert dimers of the bacterial chromosome into monomers to permit their segregation at cell division. It also contributes to the segregational stability of plasmids. In the complex XerC specifically exchanges the top DNA strands. This is Tyrosine recombinase XerC from Escherichia coli O139:H28 (strain E24377A / ETEC).